The sequence spans 283 residues: tRNA pseudouridine synthase A (283 aa).

Catalysis depends on Asp73, which acts as the Nucleophile. The RNA binding stretch occupies residues 120–124 (FHARF). Tyr131 lines the substrate pocket. The tract at residues 181–185 (QCQSR) is interaction with tRNA.

Belongs to the tRNA pseudouridine synthase TruA family. In terms of assembly, homodimer.

The catalysed reaction is uridine(38/39/40) in tRNA = pseudouridine(38/39/40) in tRNA. Its function is as follows. Formation of pseudouridine at positions 38, 39 and 40 in the anticodon stem and loop of transfer RNAs. In Pectobacterium atrosepticum (strain SCRI 1043 / ATCC BAA-672) (Erwinia carotovora subsp. atroseptica), this protein is tRNA pseudouridine synthase A.